The following is a 533-amino-acid chain: L-aspartate oxidase 1 (533 aa).

Residues 10–13 (SGLA), K32, 39–46 (ASDWAQGG), and D214 each bind FAD. The active-site Proton donor/acceptor is the R281. FAD is bound by residues E366 and 382 to 383 (SL).

Belongs to the FAD-dependent oxidoreductase 2 family. NadB subfamily. FAD serves as cofactor.

The protein localises to the cytoplasm. The enzyme catalyses L-aspartate + O2 = iminosuccinate + H2O2. It participates in cofactor biosynthesis; NAD(+) biosynthesis; iminoaspartate from L-aspartate (oxidase route): step 1/1. Functionally, catalyzes the oxidation of L-aspartate to iminoaspartate, the first step in the de novo biosynthesis of NAD(+). This Ralstonia nicotianae (strain ATCC BAA-1114 / GMI1000) (Ralstonia solanacearum) protein is L-aspartate oxidase 1 (nadB1).